The following is a 157-amino-acid chain: Protein Smg homolog (157 aa).

This sequence belongs to the Smg family.

The sequence is that of Protein Smg homolog from Xanthomonas oryzae pv. oryzae (strain MAFF 311018).